A 228-amino-acid polypeptide reads, in one-letter code: Protein ULTRAPETALA 2 (228 aa).

The SAND domain occupies Glu14–Ser121.

In terms of tissue distribution, expressed in influorescence, pollen and siliques, with a higher expression in influorescence.

It is found in the cytoplasm. It localises to the nucleus. Its function is as follows. Putative transcription factor that acts as a key negative regulator of cell accumulation in shoot and floral meristems. Negatively regulates the size of the WUSCHEL (WUS)-expressing organizing center in inflorescence meristems. May act by down-regulating expression of WUS. Can compensate for mutant ULT1 protein when overexpressed. The chain is Protein ULTRAPETALA 2 (ULT2) from Arabidopsis thaliana (Mouse-ear cress).